Here is a 424-residue protein sequence, read N- to C-terminus: CinA-like protein (424 aa).

Belongs to the CinA family.

This is CinA-like protein from Shewanella frigidimarina (strain NCIMB 400).